We begin with the raw amino-acid sequence, 81 residues long: Sulfur carrier protein TusA (81 aa).

Cys-19 serves as the catalytic Cysteine persulfide intermediate.

This sequence belongs to the sulfur carrier protein TusA family. Interacts with IscS.

The protein resides in the cytoplasm. It participates in tRNA modification. Its function is as follows. Sulfur carrier protein involved in sulfur trafficking in the cell. Part of a sulfur-relay system required for 2-thiolation during synthesis of 2-thiouridine of the modified wobble base 5-methylaminomethyl-2-thiouridine (mnm(5)s(2)U) in tRNA. Interacts with IscS and stimulates its cysteine desulfurase activity. Accepts an activated sulfur from IscS, which is then transferred to TusD, and thus determines the direction of sulfur flow from IscS to 2-thiouridine formation. Also appears to be involved in sulfur transfer for the biosynthesis of molybdopterin. The sequence is that of Sulfur carrier protein TusA from Cronobacter sakazakii (strain ATCC BAA-894) (Enterobacter sakazakii).